Reading from the N-terminus, the 127-residue chain is MAKASTKKRKVIVESIGEAHISATFNNIIISLTNKKGEVVSWSSAGKMGFRGSKKNTPYAAQMAAEDCSKVAMEAGMKKVKVYVKGPGNGRESAIRSLHNAGIEVTEIIDVTPLPHNGCRPPKRRRV.

Belongs to the universal ribosomal protein uS11 family. As to quaternary structure, part of the 30S ribosomal subunit. Interacts with proteins S7 and S18. Binds to IF-3.

Functionally, located on the platform of the 30S subunit, it bridges several disparate RNA helices of the 16S rRNA. Forms part of the Shine-Dalgarno cleft in the 70S ribosome. The polypeptide is Small ribosomal subunit protein uS11 (Flavobacterium psychrophilum (strain ATCC 49511 / DSM 21280 / CIP 103535 / JIP02/86)).